Here is a 387-residue protein sequence, read N- to C-terminus: 3-ketoacyl-CoA thiolase (387 aa).

The active-site Acyl-thioester intermediate is the Cys-91. Catalysis depends on proton acceptor residues His-343 and Cys-373.

The protein belongs to the thiolase-like superfamily. Thiolase family. Heterotetramer of two alpha chains (FadB) and two beta chains (FadA).

Its subcellular location is the cytoplasm. It carries out the reaction an acyl-CoA + acetyl-CoA = a 3-oxoacyl-CoA + CoA. Its pathway is lipid metabolism; fatty acid beta-oxidation. Functionally, catalyzes the final step of fatty acid oxidation in which acetyl-CoA is released and the CoA ester of a fatty acid two carbons shorter is formed. The chain is 3-ketoacyl-CoA thiolase from Escherichia coli O9:H4 (strain HS).